The primary structure comprises 232 residues: 5'-methylthioadenosine/S-adenosylhomocysteine nucleosidase (232 aa).

The active-site Proton acceptor is glutamate 12. Substrate is bound by residues glycine 78, isoleucine 152, and 173–174 (ME). The active-site Proton donor is the aspartate 197.

Belongs to the PNP/UDP phosphorylase family. MtnN subfamily. In terms of assembly, homodimer.

It catalyses the reaction S-adenosyl-L-homocysteine + H2O = S-(5-deoxy-D-ribos-5-yl)-L-homocysteine + adenine. The enzyme catalyses S-methyl-5'-thioadenosine + H2O = 5-(methylsulfanyl)-D-ribose + adenine. The catalysed reaction is 5'-deoxyadenosine + H2O = 5-deoxy-D-ribose + adenine. It participates in amino-acid biosynthesis; L-methionine biosynthesis via salvage pathway; S-methyl-5-thio-alpha-D-ribose 1-phosphate from S-methyl-5'-thioadenosine (hydrolase route): step 1/2. Its function is as follows. Catalyzes the irreversible cleavage of the glycosidic bond in both 5'-methylthioadenosine (MTA) and S-adenosylhomocysteine (SAH/AdoHcy) to adenine and the corresponding thioribose, 5'-methylthioribose and S-ribosylhomocysteine, respectively. Also cleaves 5'-deoxyadenosine, a toxic by-product of radical S-adenosylmethionine (SAM) enzymes, into 5-deoxyribose and adenine. Thus, is required for in vivo function of the radical SAM enzymes biotin synthase and lipoic acid synthase, that are inhibited by 5'-deoxyadenosine accumulation. In Escherichia coli O9:H4 (strain HS), this protein is 5'-methylthioadenosine/S-adenosylhomocysteine nucleosidase.